A 59-amino-acid chain; its full sequence is DNA-directed RNA polymerase subunit Rpo6 (59 aa).

It belongs to the archaeal Rpo6/eukaryotic RPB6 RNA polymerase subunit family. In terms of assembly, part of the RNA polymerase complex.

It localises to the cytoplasm. The catalysed reaction is RNA(n) + a ribonucleoside 5'-triphosphate = RNA(n+1) + diphosphate. Functionally, DNA-dependent RNA polymerase (RNAP) catalyzes the transcription of DNA into RNA using the four ribonucleoside triphosphates as substrates. This Halorubrum lacusprofundi (strain ATCC 49239 / DSM 5036 / JCM 8891 / ACAM 34) protein is DNA-directed RNA polymerase subunit Rpo6.